The following is a 167-amino-acid chain: Protein-export protein SecB (167 aa).

Belongs to the SecB family. In terms of assembly, homotetramer, a dimer of dimers. One homotetramer interacts with 1 SecA dimer.

It is found in the cytoplasm. Its function is as follows. One of the proteins required for the normal export of preproteins out of the cell cytoplasm. It is a molecular chaperone that binds to a subset of precursor proteins, maintaining them in a translocation-competent state. It also specifically binds to its receptor SecA. This Wolbachia sp. subsp. Brugia malayi (strain TRS) protein is Protein-export protein SecB.